We begin with the raw amino-acid sequence, 419 residues long: Ribosome biogenesis protein WDR12 homolog (419 aa).

Residues Val10–Glu91 form a ubiquitin-like (UBL) domain region. WD repeat units lie at residues Leu103–Pro141, Gly142–Glu184, Gly191–Gly230, Gly249–Glu287, Ser289–Val328, Gly334–Tyr374, and Gly378–Met416.

Belongs to the WD repeat WDR12/YTM1 family.

Its subcellular location is the nucleus. It localises to the nucleolus. It is found in the nucleoplasm. Required for maturation of ribosomal RNAs and formation of the large ribosomal subunit. This chain is Ribosome biogenesis protein WDR12 homolog, found in Drosophila persimilis (Fruit fly).